The following is a 417-amino-acid chain: GPI mannosyltransferase 2 (417 aa).

A run of 9 helical transmembrane segments spans residues 10–30 (FLIINVTFFAVKLLQFGLVWL), 104–124 (IVLKAVSFNLLLHYLSTWIVY), 142–162 (LALTTSVLFILSSAAGFLISV), 167–187 (IAFTFSLLGMLFRQWSISFDV), 206–226 (FCFAFAFLNRSNCLLLGLFYV), 239–259 (ITSIFYPILSGTILFGVFVYF), 312–332 (IPNFLFGLPNIVITWNAITYF), 344–364 (YIWIARIFLFIMVFLANVQII), and 394–414 (YYVMWLLIWIPTQTALFACFL).

The protein belongs to the PIGV family.

The protein resides in the endoplasmic reticulum membrane. Its pathway is glycolipid biosynthesis; glycosylphosphatidylinositol-anchor biosynthesis. Functionally, mannosyltransferase involved in glycosylphosphatidylinositol-anchor biosynthesis. Transfers the second mannose to the glycosylphosphatidylinositol during GPI precursor assembly. This chain is GPI mannosyltransferase 2 (GPI18), found in Kluyveromyces lactis (strain ATCC 8585 / CBS 2359 / DSM 70799 / NBRC 1267 / NRRL Y-1140 / WM37) (Yeast).